Reading from the N-terminus, the 219-residue chain is Transmembrane emp24 domain-containing protein 10 (219 aa).

The N-terminal stretch at 1–31 is a signal peptide; sequence MSGWSGPLARRGPGPLALLFLFLLGPSSVLA. Positions 1 to 142 are required for interaction with STX17; that stretch reads MSGWSGPLAR…KNYEEIAKVE (142 aa). Over 32–185 the chain is Lumenal; sequence ISFHLPVNSR…RDTNESTNTR (154 aa). The region spanning 41 to 193 is the GOLD domain; sequence RKCLREEIHK…TRVLYFSIFS (153 aa). The required for TMED10 and TMED2 cis-Golgi network localization stretch occupies residues 147 to 178; that stretch reads LEVELRRLEDLSESIVNDFAYMKKREEEMRDT. Dimethylated arginine is present on residues Arg171 and Arg176. The N-linked (GlcNAc...) asparagine glycan is linked to Asn179. The chain crosses the membrane as a helical span at residues 186-206; the sequence is VLYFSIFSMFCLIGLATWQVF. The tract at residues 204–219 is interaction with COPG1; the sequence is QVFYLRRFFKAKKLIE. Residues 207 to 219 lie on the Cytoplasmic side of the membrane; sequence YLRRFFKAKKLIE. Residues 207–219 are interaction with ARF1 and IL1B; that stretch reads YLRRFFKAKKLIE. Positions 211–212 match the COPII vesicle coat-binding motif; it reads FF. The COPI vesicle coat-binding motif lies at 211-219; sequence FFKAKKLIE.

This sequence belongs to the EMP24/GP25L family. As to quaternary structure, predominantly dimeric and to a lesser extent monomeric in the ER. Monomer and dimer in ERGIC and cis-Golgi network. Forms homooligomer (via GOLD domain); the assembly is promoted by direct binding with leaderless cargos and may form a protein channel that facilitates cargo entry into the ERGIC. Forms heterooligomeric complexes with other members of the p24 family such as TMED2, TMED7 and TMED9. Interacts (via GOLD domain) with TMED2 (via GOLD domain); the complex is required for export of TMED10 from the ER to the cis-Golgi network; the complex is proposed to be involved in cis-Golgi network dynamics and / or biogenesis. Associates with the COPI vesicle coat subunits (coatomer). Tetramerization of the cytoplasmic domain at the Golgi membrane in vitro; the complex is proposed to interact with COPI coatomer and induce budding of the vesicles. Interacts with COPG1; the interaction involves TMED10 homodimer. Interacts with ARF1 (GDP-bound); the interaction probably involves a TMED10 oligomer. Interacts with SEC23A, SEC24B, SEC24C and SEC24D components of the coat protein complex II/COPII, indicative of an association of TMED10 with the COPII vesicle coat. Interacts with CD59. Interacts with MPPE1/PGAP5; the complex might recruit and sort GPI-anchored proteins to the ER-exit site, or the interaction might lead to recycling of PGAP5 between the ER and the Golgi. Interacts with F2LR1/PAR2. Interacts with KDELR2/ERD2; the interaction is disrupted by KDELR2 ligand. Found in a complex composed at least of SURF4, TMED2 and TMED10. Associates with the presenilin-dependent gamma-secretase complex. Interacts with STX17; the interaction is direct. Interacts with IL-1; the interaction is direct. Interacts with RAB21 (active GTP-bound form); the interaction is indirect and regulates TMED10 abundance and localization at the Golgi.

It localises to the endoplasmic reticulum membrane. The protein resides in the endoplasmic reticulum-Golgi intermediate compartment membrane. Its subcellular location is the golgi apparatus membrane. The protein localises to the golgi apparatus. It is found in the cis-Golgi network membrane. It localises to the trans-Golgi network membrane. The protein resides in the cytoplasmic vesicle. Its subcellular location is the secretory vesicle membrane. The protein localises to the cell membrane. It is found in the melanosome. Its function is as follows. Cargo receptor involved in protein vesicular trafficking and quality control in the endoplasmic reticulum (ER) and Golgi. The p24 protein family is a group of transmembrane proteins that bind coat protein complex I/COPI and coat protein complex II/COPII involved in vesicular trafficking between the membranes. Acts at the lumenal side for incorporation of secretory cargo molecules into transport vesicles and involved in vesicle coat formation at the cytoplasmic side. Mainly functions in the early secretory pathway and cycles between the ER, ER-Golgi intermediate compartment (ERGIC) and Golgi, mediating cargo transport through COPI and COPII-coated vesicles. In COPII vesicle-mediated anterograde transport, involved in the transport of GPI-anchored proteins by acting together with TMED2 as their cargo receptor; the function specifically implies SEC24C and SEC24D of the COPII vesicle coat and lipid raft-like microdomains of the ER. Recognizes GPI anchors structural remodeled in the ER by the GPI inositol-deacylase/PGAP1 and the metallophosphoesterase MPPE1/PGAP5. In COPI vesicle-mediated retrograde transport, involved in the biogenesis of COPI vesicles and vesicle coat recruitment. Involved in trafficking of amyloid beta A4 protein and soluble APP-beta release (independent from the modulation of gamma-secretase activity). Involved in the KDELR2-mediated retrograde transport of the toxin A subunit (CTX-A-K63)together with COPI and the COOH terminus of KDELR2. On Golgi membranes, acts as a primary receptor for ARF1-GDP, a GTP-binding protein involved in COPI-vesicle formation. Increases coatomer-dependent GTPase-activating activity of ARFGAP2 which mediates the hydrolysis of ARF1-bound GTP and therefore modulates protein trafficking from the Golgi apparatus. Involved in the exocytic trafficking of G protein-coupled receptors F2LR1/PAR2 (trypsin and tryspin-like enzyme receptor), OPRM1 (opioid receptor) and P2RY4 (UTD and UDP receptor) from the Golgi to the plasma membrane, thus contributing to receptor resensitization. In addition to its cargo receptor activity, may also act as a protein channel after oligomerization, facilitating the post-translational entry of leaderless cytoplasmic cargo into the ERGIC. Involved in the translocation into ERGIC, the vesicle entry and the secretion of leaderless cargos (lacking the secretion signal sequence), including the mature form of interleukin 1/IL-1 family members, the alpha-crystallin B chain HSPB5, the carbohydrate-binding proteins galectin-1/LGALS1 and galectin-3/LGALS3, the microtubule-associated protein Tau/MAPT, and the annexin A1/ANXA1; the translocation process is dependent on cargo protein unfolding and enhanced by chaperones HSP90AB1 and HSP90B1/GRP9. Could also associates with the presenilin-dependent gamma-secretase complex in order to regulate gamma-cleavages of the amyloid beta A4 protein to yield amyloid-beta 40/Abeta40. The polypeptide is Transmembrane emp24 domain-containing protein 10 (TMED10) (Oryctolagus cuniculus (Rabbit)).